Consider the following 486-residue polypeptide: Solute carrier family 2, facilitated glucose transporter member 5 (486 aa).

Met-1 bears the N-acetylmethionine mark. The Cytoplasmic portion of the chain corresponds to 1–19; sequence MEQEGQEKKKEGRLTLVLA. A helical membrane pass occupies residues 20–40; the sequence is LRTLIAAFGSSFQYAYNVSVC. Position 33 (Tyr-33) interacts with D-fructose. The Extracellular portion of the chain corresponds to 41–69; the sequence is NSPSELMTEFYNDTYYDRTGELIDEFPLT. Asn-52 carries N-linked (GlcNAc...) asparagine glycosylation. Residues 70 to 92 form a helical membrane-spanning segment; the sequence is LLWSVTVSMFPSGGFAGSLLVGP. Residues 93 to 99 are Cytoplasmic-facing; it reads LVNKFGR. The chain crosses the membrane as a helical span at residues 100–120; the sequence is KGALLFNNIFSIVPAILMGCS. The Extracellular segment spans residues 121–127; it reads KVARSFE. The chain crosses the membrane as a helical span at residues 128–150; the sequence is LIIISRLLVGICAGVSSNVVPMY. The Cytoplasmic segment spans residues 151–162; it reads LGELAPKNLRGA. Residues 163–183 form a helical membrane-spanning segment; it reads LGVESQLFITLGILVAQIFGL. Gln-168 lines the D-fructose pocket. At 184-192 the chain is on the extracellular side; it reads RSIRQQKGW. Residues 193-211 traverse the membrane as a helical segment; it reads PILLGLTGGPAAAACPPFF. Topologically, residues 212 to 274 are cytoplasmic; that stretch reads PESPRYLLIG…LCAMRGLAWQ (63 aa). The helical transmembrane segment at 275–294 threads the bilayer; it reads LISVVPLMWQQLSGVNAIYY. D-fructose-binding positions include Gln-284 and 292-294; that span reads IYY. The Extracellular portion of the chain corresponds to 295 to 306; that stretch reads YDQIYLSPLDTD. A helical transmembrane segment spans residues 307-327; sequence TQYYTAATGAVNVLMTVCTVF. Topologically, residues 328–334 are cytoplasmic; sequence VVESWAR. A helical membrane pass occupies residues 335 to 355; it reads LLLLLGFSPLAPTCCVLTAAL. Residues 356-363 lie on the Extracellular side of the membrane; sequence ALQDTVSW. Residues 364–385 traverse the membrane as a helical segment; it reads MPYISIVCIIVYVIGHAIGPAI. His-379 serves as a coordination point for D-fructose. The Cytoplasmic segment spans residues 386–402; that stretch reads RSLYTEIFLQSGRPPTW. Residues 403 to 421 form a helical membrane-spanning segment; it reads WGQVHWLSNFTVGLVFPLI. 407–408 contacts D-fructose; the sequence is HW. Residues 422-426 lie on the Extracellular side of the membrane; that stretch reads QWAGL. A helical transmembrane segment spans residues 427–447; that stretch reads YSFIIFGVACLSTTVYTFLIV. The Cytoplasmic segment spans residues 448–486; sequence PETKGKSFIEIIRRFIRMNKVEVSPDREELKDFPPDVSE.

Belongs to the major facilitator superfamily. Sugar transporter (TC 2.A.1.1) family. Glucose transporter subfamily. Detected in jejunum. Detected at the intestinal brush-border membrane (at protein level). Detected in duodenum, jejunum and kidney.

The protein resides in the apical cell membrane. It is found in the cell membrane. Its subcellular location is the sarcolemma. The catalysed reaction is D-fructose(out) = D-fructose(in). Functionally, functions as a fructose transporter that has only low activity with other monosaccharides. Can mediate the uptake of deoxyglucose, but with low efficiency. Essential for fructose uptake in the small intestine. Plays a role in the regulation of salt uptake and blood pressure in response to dietary fructose. Required for the development of high blood pressure in response to high dietary fructose intake. The sequence is that of Solute carrier family 2, facilitated glucose transporter member 5 from Oryctolagus cuniculus (Rabbit).